Reading from the N-terminus, the 278-residue chain is Pyrroline-5-carboxylate reductase 2 (278 aa).

Belongs to the pyrroline-5-carboxylate reductase family.

It localises to the cytoplasm. The catalysed reaction is L-proline + NADP(+) = (S)-1-pyrroline-5-carboxylate + NADPH + 2 H(+). It carries out the reaction L-proline + NAD(+) = (S)-1-pyrroline-5-carboxylate + NADH + 2 H(+). Its pathway is amino-acid biosynthesis; L-proline biosynthesis; L-proline from L-glutamate 5-semialdehyde: step 1/1. Catalyzes the reduction of 1-pyrroline-5-carboxylate (PCA) to L-proline. The sequence is that of Pyrroline-5-carboxylate reductase 2 (proI) from Bacillus subtilis (strain 168).